The primary structure comprises 862 residues: Protein translocase subunit SecA (862 aa).

ATP-binding positions include Gln86, 104-108, and Asp499; that span reads GEGKT. Positions 848, 850, 859, and 860 each coordinate Zn(2+).

This sequence belongs to the SecA family. As to quaternary structure, monomer and homodimer. Part of the essential Sec protein translocation apparatus which comprises SecA, SecYEG and auxiliary proteins SecDF-YajC and YidC. Zn(2+) is required as a cofactor.

It localises to the cell inner membrane. The protein localises to the cytoplasm. The enzyme catalyses ATP + H2O + cellular proteinSide 1 = ADP + phosphate + cellular proteinSide 2.. Part of the Sec protein translocase complex. Interacts with the SecYEG preprotein conducting channel. Has a central role in coupling the hydrolysis of ATP to the transfer of proteins into and across the cell membrane, serving both as a receptor for the preprotein-SecB complex and as an ATP-driven molecular motor driving the stepwise translocation of polypeptide chains across the membrane. The polypeptide is Protein translocase subunit SecA (Ehrlichia canis (strain Jake)).